The chain runs to 308 residues: Insoluble matrix shell protein 4 (308 aa).

Disordered stretches follow at residues 1 to 21 (HGNG…GNGY), 47 to 104 (NTNS…PNAV), and 134 to 250 (YDSN…NTNS). Residues 47 to 99 (NTNSLNGNNNGNSNNNGNGNNNGNSNNNGNGNNNGNTNNGNSYDSNTNDDSNS) are compositionally biased toward low complexity.

In terms of tissue distribution, component of the acid-insoluble organic matrix of the calcified shell.

It localises to the secreted. The sequence is that of Insoluble matrix shell protein 4 from Ruditapes philippinarum (Japanese carpet shell).